The sequence spans 267 residues: Stomatin-3 (267 aa).

A helical membrane pass occupies residues 17–37; the sequence is FVALICAWAFLLLTFPVSIFF.

It belongs to the band 7/mec-2 family.

The protein localises to the membrane. This chain is Stomatin-3 (sto-3), found in Caenorhabditis elegans.